The sequence spans 375 residues: Queuine tRNA-ribosyltransferase (375 aa).

The active-site Proton acceptor is D89. Substrate is bound by residues 89 to 93, D143, Q187, and G214; that span reads DSGGF. An RNA binding region spans residues 245–251; the sequence is GVGKPED. Catalysis depends on D264, which acts as the Nucleophile. Residues 269-273 are RNA binding; important for wobble base 34 recognition; the sequence is TRNAR. Zn(2+) contacts are provided by C302, C304, C307, and H333.

Belongs to the queuine tRNA-ribosyltransferase family. Homodimer. Within each dimer, one monomer is responsible for RNA recognition and catalysis, while the other monomer binds to the replacement base PreQ1. It depends on Zn(2+) as a cofactor.

It catalyses the reaction 7-aminomethyl-7-carbaguanine + guanosine(34) in tRNA = 7-aminomethyl-7-carbaguanosine(34) in tRNA + guanine. It functions in the pathway tRNA modification; tRNA-queuosine biosynthesis. Functionally, catalyzes the base-exchange of a guanine (G) residue with the queuine precursor 7-aminomethyl-7-deazaguanine (PreQ1) at position 34 (anticodon wobble position) in tRNAs with GU(N) anticodons (tRNA-Asp, -Asn, -His and -Tyr). Catalysis occurs through a double-displacement mechanism. The nucleophile active site attacks the C1' of nucleotide 34 to detach the guanine base from the RNA, forming a covalent enzyme-RNA intermediate. The proton acceptor active site deprotonates the incoming PreQ1, allowing a nucleophilic attack on the C1' of the ribose to form the product. After dissociation, two additional enzymatic reactions on the tRNA convert PreQ1 to queuine (Q), resulting in the hypermodified nucleoside queuosine (7-(((4,5-cis-dihydroxy-2-cyclopenten-1-yl)amino)methyl)-7-deazaguanosine). This chain is Queuine tRNA-ribosyltransferase, found in Photobacterium profundum (strain SS9).